Reading from the N-terminus, the 84-residue chain is Small ribosomal subunit protein bS20 (84 aa).

Residues 1 to 28 (MPNIKSAIKRVKTAETRNSRNASQRSAM) form a disordered region.

Belongs to the bacterial ribosomal protein bS20 family.

Binds directly to 16S ribosomal RNA. The sequence is that of Small ribosomal subunit protein bS20 from Listeria monocytogenes serotype 4b (strain CLIP80459).